Reading from the N-terminus, the 305-residue chain is LysM and putative peptidoglycan-binding domain-containing protein 3 (305 aa).

Residues 1 to 216 (MAGRNQNRTV…PYYGADWGIG (216 aa)) lie on the Extracellular side of the membrane. 2 N-linked (GlcNAc...) asparagine glycosylation sites follow: Asn7 and Asn26. Ser55 is modified (phosphoserine). The LysM domain occupies 65–109 (LTKDIQEGDTLNAVALQYCCTVADIKRVNNLISDQDFFALRSIKI). Asn199 is a glycosylation site (N-linked (GlcNAc...) asparagine). Residues 217-237 (WWTAVVIMLIVGIITPVFYLL) form a helical membrane-spanning segment. Residues 238–305 (YYEILAKVDV…PQAHDAQHKT (68 aa)) lie on the Cytoplasmic side of the membrane. The interval 253–305 (VGSSHLHPGLTPPTQHREMENEIGPTKGIPVGQQDDHKLYRQDPQAHDAQHKT) is disordered. Over residues 286–305 (QDDHKLYRQDPQAHDAQHKT) the composition is skewed to basic and acidic residues.

Its subcellular location is the cell membrane. The protein localises to the golgi apparatus. Its function is as follows. Essential for Golgi structural integrity. In Mus musculus (Mouse), this protein is LysM and putative peptidoglycan-binding domain-containing protein 3 (Lysmd3).